The primary structure comprises 676 residues: Envelope glycoprotein (676 aa).

The signal sequence occupies residues 1 to 34 (MACSTLSKSPKDKIDPRDLLIPLILFLSLKGARS). The segment at 35 to 270 (AAPGSSPHQV…KYQNLGPRVP (236 aa)) is receptor-binding domain (RBD). Residues 35-620 (AAPGSSPHQV…FNRSPWFTTL (586 aa)) are Extracellular-facing. Asn-46 carries an N-linked (GlcNAc...) asparagine; by host glycan. Cystine bridges form between Cys-80–Cys-132, Cys-106–Cys-121, Cys-107–Cys-117, Cys-155–Cys-175, and Cys-167–Cys-180. Zn(2+) is bound at residue His-89. Asp-120 serves as a coordination point for Zn(2+). A glycan (N-linked (GlcNAc...) asparagine; by host) is linked at Asn-202. Cys-212 and Cys-218 are disulfide-bonded. A disordered region spans residues 287-322 (NPLPKPAKSPSASNSTPTLISPSPAPTQPPPAGTGD). Positions 294–308 (KSPSASNSTPTLISP) are enriched in low complexity. Positions 309–318 (SPAPTQPPPA) are enriched in pro residues. A glycan (N-linked (GlcNAc...) asparagine; by host) is linked at Asn-336. 6 cysteine pairs are disulfide-bonded: Cys-346–Cys-349, Cys-346–Cys-573, Cys-376–Cys-430, Cys-395–Cys-407, Cys-437–Cys-450, and Cys-565–Cys-572. The short motif at 346 to 349 (CWLC) is the CXXC element. 2 N-linked (GlcNAc...) asparagine; by host glycosylation sites follow: Asn-368 and Asn-375. N-linked (GlcNAc...) asparagine; by host glycosylation is found at Asn-408 and Asn-444. The tract at residues 482–502 (VSLTLALLLGGLTMGGIAAGV) is fusion peptide. Residues 513-547 (QQFQQLHAAVQDDLKEVEKSITNLEKSLTSLSEVV) are a coiled coil. Positions 548–564 (LQNRRGLDLLFLKEGGL) are immunosuppression. The CX6CC signature appears at 565-573 (CAALKEECC). The helical transmembrane segment at 621-641 (ISTIMGPLIILLLILLFGPCI) threads the bilayer. Cys-640 is lipidated: S-palmitoyl cysteine; by host. Residues 642–676 (LNRLVQFVKDRISVVQALVLTQQYHQLKPLEYEPQ) are Cytoplasmic-facing. The YXXL motif; contains endocytosis signal signature appears at 665–668 (YHQL).

The mature envelope protein (Env) consists of a trimer of SU-TM heterodimers attached by a labile interchain disulfide bond. Post-translationally, specific enzymatic cleavages in vivo yield mature proteins. Envelope glycoproteins are synthesized as an inactive precursor that is N-glycosylated and processed likely by host cell furin or by a furin-like protease in the Golgi to yield the mature SU and TM proteins. The cleavage site between SU and TM requires the minimal sequence [KR]-X-[KR]-R. The R-peptide is released from the C-terminus of the cytoplasmic tail of the TM protein upon particle formation as a result of proteolytic cleavage by the viral protease. Cleavage of this peptide is required for TM to become fusogenic. The CXXC motif is highly conserved across a broad range of retroviral envelope proteins. It is thought to participate in the formation of a labile disulfide bond possibly with the CX6CC motif present in the transmembrane protein. Isomerization of the intersubunit disulfide bond to an SU intrachain disulfide bond is thought to occur upon receptor recognition in order to allow membrane fusion. In terms of processing, the transmembrane protein is palmitoylated. Post-translationally, the R-peptide is palmitoylated.

The protein localises to the virion membrane. Its subcellular location is the host cell membrane. Its function is as follows. The surface protein (SU) attaches the virus to the host cell by binding to its receptor. This interaction triggers the refolding of the transmembrane protein (TM) and is thought to activate its fusogenic potential by unmasking its fusion peptide. Fusion occurs at the host cell plasma membrane. The transmembrane protein (TM) acts as a class I viral fusion protein. Under the current model, the protein has at least 3 conformational states: pre-fusion native state, pre-hairpin intermediate state, and post-fusion hairpin state. During viral and target cell membrane fusion, the coiled coil regions (heptad repeats) assume a trimer-of-hairpins structure, positioning the fusion peptide in close proximity to the C-terminal region of the ectodomain. The formation of this structure appears to drive apposition and subsequent fusion of viral and target cell membranes. Membranes fusion leads to delivery of the nucleocapsid into the cytoplasm. This chain is Envelope glycoprotein (env), found in Mus musculus (Mouse).